A 461-amino-acid chain; its full sequence is MSQDGTWSDESDWELDDSDLAEFGPVVAVVGRPNVGKSTLVNRILGRREAVVQDVPGVTRDRVSYDAMWTGRRFVVQDTGGWEPDAKGLKRLVAEQASVAMRTADAVILVVDVGVGATDADEAAARILLRSGKLVFLAANKVDGEKGESDASALWSLGLGEPHAISAMHGRGVADLLDKVLAALPNVAESTSLDGGLRRVALVGKPNVGKSSLLNKLAGDQRSVVHEAAGTTVDPVDSLIEMGGRVWRFVDTAGLRRKVGQASGHEFYASVRTHGAIDSAEVVIMLIDASEPLTGQDQRVLSMVIDAGRALVLAFNKWDLVDEDRCDLLEREIDRELVQVRWAQRVNISAKTGRAVQKLVPAMENSLASWDTRIATGPLNIWIKAVVAATPPPVRGGKQPRILFATQATARPPTFVLFTTGFLEACYRRFLERRLRETFGFEGSPIRINVRVREKRGLKRR.

2 EngA-type G domains span residues 25–188 (PVVA…PNVA) and 198–371 (RRVA…ASWD). Residues 31–38 (GRPNVGKS), 78–82 (DTGGW), 140–143 (NKVD), 204–211 (GKPNVGKS), 251–255 (DTAGL), and 316–319 (NKWD) each bind GTP. Residues 372-454 (TRIATGPLNI…PIRINVRVRE (83 aa)) enclose the KH-like domain.

The protein belongs to the TRAFAC class TrmE-Era-EngA-EngB-Septin-like GTPase superfamily. EngA (Der) GTPase family. In terms of assembly, associates with the 50S ribosomal subunit.

Its function is as follows. GTPase that plays an essential role in the late steps of ribosome biogenesis. In Mycobacterium leprae (strain TN), this protein is GTPase Der.